We begin with the raw amino-acid sequence, 525 residues long: Ribosomal protein S6 kinase beta-1 (525 aa).

Residues 1–54 form a disordered region; it reads MRRRRRRDGFYPAPDFRDREAEDMAGVFDIDLDQPEDAGSEDELEEGGQLNESM. Residues 28-32 carry the TOS motif motif; the sequence is FDIDL. The segment covering 30–46 has biased composition (acidic residues); the sequence is IDLDQPEDAGSEDELEE. The Protein kinase domain occupies 91–352; that stretch reads FELLRVLGKG…AGEVQAHPFF (262 aa). ATP contacts are provided by residues 97–105 and lysine 123; that span reads LGKGGYGKV. The Proton acceptor role is filled by aspartate 218. Position 252 is a phosphothreonine; by PDPK1 (threonine 252). In terms of domain architecture, AGC-kinase C-terminal spans 353 to 423; it reads RHINWEELLA…VAPSVLESVK (71 aa). Positions 380-399 are disordered; it reads SQFDSKFTRQTPVDSPDDST. Over residues 381–399 the composition is skewed to polar residues; it reads QFDSKFTRQTPVDSPDDST. Serine 394 carries the post-translational modification Phosphoserine. Threonine 412 carries the phosphothreonine; by MTOR, NEK6 and NEK7 modification. Positions 424 to 525 are autoinhibitory domain; it reads EKFSFEPKIR…KRPEHLRMNL (102 aa). Serine 434 and serine 441 each carry phosphoserine. Phosphothreonine is present on threonine 444. A phosphoserine mark is found at serine 447 and serine 452. Residues 486–509 are disordered; it reads VTTSGEASAPLPIRQPNSGPYKKQ. Lysine 516 is subject to N6-acetyllysine.

The protein belongs to the protein kinase superfamily. AGC Ser/Thr protein kinase family. S6 kinase subfamily. As to quaternary structure, interacts with PPP1R9A/neurabin-1. Interacts with RPTOR. Interacts with IRS1. Interacts with EIF3B and EIF3C. Interacts with TRAF4. Interacts with POLDIP3. Interacts (via N-terminus) with IER5. Phosphorylation at Thr-412 is regulated by mTORC1. The phosphorylation at this site is maintained by an agonist-dependent autophosphorylation mechanism. Activated by phosphorylation at Thr-252 by PDPK1. Dephosphorylation by PPP1CC at Thr-412 in mitochondrion.

The protein localises to the cytoplasm. Its subcellular location is the synapse. The protein resides in the synaptosome. It localises to the mitochondrion outer membrane. It is found in the mitochondrion. The enzyme catalyses L-seryl-[protein] + ATP = O-phospho-L-seryl-[protein] + ADP + H(+). The catalysed reaction is L-threonyl-[protein] + ATP = O-phospho-L-threonyl-[protein] + ADP + H(+). Activation requires multiple phosphorylation events on serine/threonine residues. Activation appears to be first mediated by phosphorylation of multiple sites in the autoinhibitory domain, which facilitates phosphorylation at Thr-412, disrupting the autoinhibitory mechanism and allowing phosphorylation of Thr-252 by PDPK1. The active conformation of the kinase is believed to be stabilized by a mechanism involving three conserved phosphorylation sites located in the kinase domain activation loop (Thr-252) and in the AGC-kinase C-terminal domain (Ser-394 in the middle of the tail/linker region and Thr-412 within a hydrophobic motif at its end). Activated by mTORC1; isoform Alpha I and isoform Alpha II are sensitive to rapamycin, which inhibits activating phosphorylation at Thr-412. Activated by PDPK1. In terms of biological role, serine/threonine-protein kinase that acts downstream of mTOR signaling in response to growth factors and nutrients to promote cell proliferation, cell growth and cell cycle progression. Regulates protein synthesis through phosphorylation of EIF4B, RPS6 and EEF2K, and contributes to cell survival by repressing the pro-apoptotic function of BAD. Under conditions of nutrient depletion, the inactive form associates with the EIF3 translation initiation complex. Upon mitogenic stimulation, phosphorylation by the mechanistic target of rapamycin complex 1 (mTORC1) leads to dissociation from the EIF3 complex and activation. The active form then phosphorylates and activates several substrates in the pre-initiation complex, including the EIF2B complex and the cap-binding complex component EIF4B. Also controls translation initiation by phosphorylating a negative regulator of EIF4A, PDCD4, targeting it for ubiquitination and subsequent proteolysis. Promotes initiation of the pioneer round of protein synthesis by phosphorylating POLDIP3/SKAR. In response to IGF1, activates translation elongation by phosphorylating EEF2 kinase (EEF2K), which leads to its inhibition and thus activation of EEF2. Also plays a role in feedback regulation of mTORC2 by mTORC1 by phosphorylating MAPKAP1/SIN1, MTOR and RICTOR, resulting in the inhibition of mTORC2 and AKT1 signaling. Also involved in feedback regulation of mTORC1 and mTORC2 by phosphorylating DEPTOR. Mediates cell survival by phosphorylating the pro-apoptotic protein BAD and suppressing its pro-apoptotic function. Phosphorylates mitochondrial URI1 leading to dissociation of a URI1-PPP1CC complex. The free mitochondrial PPP1CC can then dephosphorylate RPS6KB1 at Thr-412, which is proposed to be a negative feedback mechanism for the RPS6KB1 anti-apoptotic function. Mediates TNF-alpha-induced insulin resistance by phosphorylating IRS1 at multiple serine residues, resulting in accelerated degradation of IRS1. In cells lacking functional TSC1-2 complex, constitutively phosphorylates and inhibits GSK3B. May be involved in cytoskeletal rearrangement through binding to neurabin. Phosphorylates and activates the pyrimidine biosynthesis enzyme CAD, downstream of MTOR. Following activation by mTORC1, phosphorylates EPRS and thereby plays a key role in fatty acid uptake by adipocytes and also most probably in interferon-gamma-induced translation inhibition. This chain is Ribosomal protein S6 kinase beta-1 (RPS6KB1), found in Oryctolagus cuniculus (Rabbit).